The following is a 459-amino-acid chain: Glycosyl hydrolase family 109 protein (459 aa).

Residues 1–31 (MHNIHRRHFLKAAGAVTAGLITANITASTHA) constitute a signal peptide (tat-type signal). NAD(+) contacts are provided by residues 64–65 (ER), D86, 135–138 (WEWH), 155–156 (EV), and N184. Substrate contacts are provided by residues Y213, R232, 244 to 247 (YPTH), and Y326. An NAD(+)-binding site is contributed by Y244.

Belongs to the Gfo/Idh/MocA family. Glycosyl hydrolase 109 subfamily. NAD(+) is required as a cofactor. Predicted to be exported by the Tat system. The position of the signal peptide cleavage has not been experimentally proven.

Its function is as follows. Glycosidase. This chain is Glycosyl hydrolase family 109 protein, found in Shewanella sp. (strain W3-18-1).